The sequence spans 302 residues: Ribonucleoside-diphosphate reductase small subunit (302 aa).

Fe cation contacts are provided by Glu-61, Glu-91, and His-94. Tyr-98 is an active-site residue. Residues 147 to 167 form a helical membrane-spanning segment; it reads ILVFLLIEGIFFISSFYSIAL. Residues Glu-154, Glu-188, and His-191 each coordinate Fe cation.

This sequence belongs to the ribonucleoside diphosphate reductase small chain family. Heterotetramer composed of a homodimer of the large subunit (R1) and a homodimer of the small subunit (R2). Larger multisubunit protein complex are also active, composed of (R1)n(R2)n. Fe cation serves as cofactor.

The protein resides in the host membrane. It catalyses the reaction a 2'-deoxyribonucleoside 5'-diphosphate + [thioredoxin]-disulfide + H2O = a ribonucleoside 5'-diphosphate + [thioredoxin]-dithiol. Ribonucleoside-diphosphate reductase holoenzyme provides the precursors necessary for viral DNA synthesis. Allows virus growth in non-dividing cells, as well as reactivation from latency in infected hosts. Catalyzes the biosynthesis of deoxyribonucleotides from the corresponding ribonucleotides. The polypeptide is Ribonucleoside-diphosphate reductase small subunit (Homo sapiens (Human)).